The chain runs to 478 residues: UDP-N-acetylmuramate--L-alanine ligase (478 aa).

ATP is bound at residue 126–132 (GTHGKTT).

It belongs to the MurCDEF family.

The protein localises to the cytoplasm. The enzyme catalyses UDP-N-acetyl-alpha-D-muramate + L-alanine + ATP = UDP-N-acetyl-alpha-D-muramoyl-L-alanine + ADP + phosphate + H(+). It participates in cell wall biogenesis; peptidoglycan biosynthesis. Functionally, cell wall formation. The sequence is that of UDP-N-acetylmuramate--L-alanine ligase from Mycolicibacterium vanbaalenii (strain DSM 7251 / JCM 13017 / BCRC 16820 / KCTC 9966 / NRRL B-24157 / PYR-1) (Mycobacterium vanbaalenii).